Reading from the N-terminus, the 148-residue chain is UPF0260 protein Spro_2751 (148 aa).

Belongs to the UPF0260 family.

The protein is UPF0260 protein Spro_2751 of Serratia proteamaculans (strain 568).